The sequence spans 249 residues: Phosphatidylserine decarboxylase proenzyme (249 aa).

The Schiff-base intermediate with substrate; via pyruvic acid role is filled by serine 208. The residue at position 208 (serine 208) is a Pyruvic acid (Ser); by autocatalysis.

The protein belongs to the phosphatidylserine decarboxylase family. PSD-A subfamily. As to quaternary structure, heterodimer of a large membrane-associated beta subunit and a small pyruvoyl-containing alpha subunit. The cofactor is pyruvate. Is synthesized initially as an inactive proenzyme. Formation of the active enzyme involves a self-maturation process in which the active site pyruvoyl group is generated from an internal serine residue via an autocatalytic post-translational modification. Two non-identical subunits are generated from the proenzyme in this reaction, and the pyruvate is formed at the N-terminus of the alpha chain, which is derived from the carboxyl end of the proenzyme. The post-translation cleavage follows an unusual pathway, termed non-hydrolytic serinolysis, in which the side chain hydroxyl group of the serine supplies its oxygen atom to form the C-terminus of the beta chain, while the remainder of the serine residue undergoes an oxidative deamination to produce ammonia and the pyruvoyl prosthetic group on the alpha chain.

The protein resides in the cell membrane. It catalyses the reaction a 1,2-diacyl-sn-glycero-3-phospho-L-serine + H(+) = a 1,2-diacyl-sn-glycero-3-phosphoethanolamine + CO2. It functions in the pathway phospholipid metabolism; phosphatidylethanolamine biosynthesis; phosphatidylethanolamine from CDP-diacylglycerol: step 2/2. Functionally, catalyzes the formation of phosphatidylethanolamine (PtdEtn) from phosphatidylserine (PtdSer). This chain is Phosphatidylserine decarboxylase proenzyme, found in Erythrobacter litoralis (strain HTCC2594).